Consider the following 416-residue polypeptide: Lipid III flippase (416 aa).

At 1-17 the chain is on the cytoplasmic side; that stretch reads MSLAKASLWTAASTLVK. Residues 18-38 traverse the membrane as a helical segment; it reads IGAGLLVGKLLAVSFGPAGLG. Residues 39-45 lie on the Periplasmic side of the membrane; sequence LAANFRQ. The helical transmembrane segment at 46 to 66 threads the bilayer; that stretch reads LITVLGVLAGAGIFNGVTKYV. The Cytoplasmic segment spans residues 67-84; the sequence is AQYHDNPQQLRRVVGTSS. A helical membrane pass occupies residues 85 to 105; sequence AMVLGFSTLMALVFVLAAAPI. Over 106–121 the chain is Periplasmic; sequence SQGLFGNTDYQGLVRL. Residues 122 to 142 traverse the membrane as a helical segment; that stretch reads VALVQMGIAWGNLLLALMKGF. Over 143–144 the chain is Cytoplasmic; it reads RD. Residues 145-165 form a helical membrane-spanning segment; sequence AAGNALSLIVGSLIGVLAYYV. At 166–174 the chain is on the periplasmic side; the sequence is SYRLGGYEG. The chain crosses the membrane as a helical span at residues 175–195; the sequence is ALLGLALIPALVVIPAAIMLI. Residues 196 to 216 lie on the Cytoplasmic side of the membrane; that stretch reads KRGVIPLSYLKPSWDNGLAGQ. A helical transmembrane segment spans residues 217-237; it reads LSKFTLMALITSVTLPVAYIM. Residues 238-259 are Periplasmic-facing; it reads MRKLLAAQYSWDEVGIWQGVSS. The chain crosses the membrane as a helical span at residues 260-280; sequence ISDAYLQFITASFSVYLLPTL. The Cytoplasmic portion of the chain corresponds to 281-302; sequence SRLTEKRDITREVVKSLKFVLP. Residues 303–323 form a helical membrane-spanning segment; sequence AVAAASFTVWLLRDFAIWLLL. At 324–334 the chain is on the periplasmic side; sequence SNKFTAMRDLF. A helical membrane pass occupies residues 335-355; the sequence is AWQLVGDVLKVGAYVFGYLVI. The Cytoplasmic segment spans residues 356-370; that stretch reads AKASLRFYILAEVSQ. A run of 2 helical transmembrane segments spans residues 371–391 and 392–412; these read FTLL…LGAA and QAYM…FLLW. Residues 413-416 lie on the Cytoplasmic side of the membrane; sequence RRRA.

Belongs to the polysaccharide transport (PST) (TC 2.A.66.2) family. In terms of assembly, probably part of a complex composed of WzxE, WzyE and WzzE.

The protein resides in the cell inner membrane. Its pathway is bacterial outer membrane biogenesis; enterobacterial common antigen biosynthesis. Functionally, mediates the transbilayer movement of Und-PP-GlcNAc-ManNAcA-Fuc4NAc (lipid III) from the inner to the outer leaflet of the cytoplasmic membrane during the assembly of enterobacterial common antigen (ECA). Required for the assembly of the phosphoglyceride-linked form of ECA (ECA(PG)) and the water-soluble cyclic form of ECA (ECA(CYC)). Could also mediate the translocation of Und-PP-GlcNAc. This chain is Lipid III flippase, found in Escherichia coli (strain K12).